We begin with the raw amino-acid sequence, 259 residues long: 3'-5' ssDNA/RNA exonuclease TatD (259 aa).

A divalent metal cation-binding residues include Glu92, His128, and His153.

Belongs to the metallo-dependent hydrolases superfamily. TatD-type hydrolase family. TatD subfamily. As to quaternary structure, monomer. It depends on Mg(2+) as a cofactor.

The protein localises to the cytoplasm. In terms of biological role, 3'-5' exonuclease that prefers single-stranded DNA and RNA. May play a role in the H(2)O(2)-induced DNA damage repair. This is 3'-5' ssDNA/RNA exonuclease TatD from Erwinia amylovora (strain ATCC 49946 / CCPPB 0273 / Ea273 / 27-3).